The chain runs to 187 residues: Accessory gene regulator protein B (187 aa).

A run of 5 helical transmembrane segments spans residues 49-69, 82-102, 107-127, 143-163, and 164-184; these read LAYILNIFIFTLITNISFYLI, FWCYIESITLFIVLPLLVLHF, TLMMFLALLSVGVVIKYAPAA, YFSIIISTILFIITLFVKEPY, and TQFIQLGIIIQAITLLPIYYS.

It belongs to the AgrB family.

The protein resides in the cell membrane. Functionally, essential for the production of a quorum sensing system signal molecule, the autoinducing peptide (AIP). This quorum sensing system is responsible for the regulation of the expression of virulence factor genes. Involved in the proteolytic processing of AgrD, the precursor of AIP. In Staphylococcus aureus (strain MRSA252), this protein is Accessory gene regulator protein B.